The sequence spans 400 residues: Nucleoside permease NupC (400 aa).

Topologically, residues 1 to 3 (MDR) are cytoplasmic. A helical membrane pass occupies residues 4 to 24 (VLHFVLALAVVAILALLVSSD). Residues 25-36 (RKKIRIRYVIQL) are Periplasmic-facing. The chain crosses the membrane as a helical span at residues 37-57 (LVIEVLLAWFFLNSDVGLGFV). Residues 58–86 (KGFSEMFEKLLGFANEGTNFVFGSMNDQG) are Cytoplasmic-facing. The helical transmembrane segment at 87 to 107 (LAFFFLKVLCPIVFISALIGI) threads the bilayer. The Periplasmic portion of the chain corresponds to 108-168 (LQHIRVLPVI…GKISRNRMYT (61 aa)). A helical transmembrane segment spans residues 169-189 (MAATAMSTVSMSIVGAYMTML). The Cytoplasmic portion of the chain corresponds to 190-192 (EPK). Residues 193 to 213 (YVVAALVLNMFSTFIVLSLIN) traverse the membrane as a helical segment. The Periplasmic portion of the chain corresponds to 214–250 (PYRVDASEENIQMSNLHEGQSFFEMLGEYILAGFKVA). A helical transmembrane segment spans residues 251–271 (IIVAAMLIGFIALIAALNALF). Residues 272–281 (ATVTGWFGYS) are Cytoplasmic-facing. The chain crosses the membrane as a helical span at residues 282-302 (ISFQGILGYIFYPIAWVMGVP). Over 303-341 (SSEALQVGSIMATKLVSNEFVAMMDLQKIASTLSPRAEG) the chain is Periplasmic. A helical transmembrane segment spans residues 342 to 362 (IISVFLVSFANFSSIGIIAGA). Residues 363–378 (VKGLNEEQGNVVSRFG) lie on the Cytoplasmic side of the membrane. The helical transmembrane segment at 379–399 (LKLVYGSTLVSVLSASIAALV) threads the bilayer. A topological domain (periplasmic) is located at residue leucine 400.

The protein belongs to the concentrative nucleoside transporter (CNT) (TC 2.A.41) family.

Its subcellular location is the cell inner membrane. The enzyme catalyses adenosine(in) + H(+)(in) = adenosine(out) + H(+)(out). It catalyses the reaction uridine(in) + H(+)(in) = uridine(out) + H(+)(out). The catalysed reaction is thymidine(in) + H(+)(in) = thymidine(out) + H(+)(out). It carries out the reaction cytidine(in) + H(+)(in) = cytidine(out) + H(+)(out). The enzyme catalyses 2'-deoxycytidine(in) + H(+)(in) = 2'-deoxycytidine(out) + H(+)(out). Transport is inhibited by the proton uncoupler dinitrophenol. Inhibited by the nucleoside antibiotic showdomycin. Nucleoside transport protein that can transport adenosine, uridine, thymidine, cytidine and deoxycytidine. Shows weak activity with inosine and xanthosine. Transport is driven by a proton motive force. Does not transport guanosine, deoxyguanosine, hypoxanthine or uracil. Also shows activity with the chemotherapeutic drugs 3'-azido-3'-deoxythymidine (AZT), 2',3'- dideoxycytidine (ddC) and 2'-deoxy-2',2'-difluorocytidine (gemcitabine). The protein is Nucleoside permease NupC of Escherichia coli (strain K12).